The following is a 163-amino-acid chain: Phosphopantetheine adenylyltransferase (163 aa).

Threonine 10 provides a ligand contact to substrate. ATP contacts are provided by residues 10 to 11 and histidine 18; that span reads TF. Lysine 42, leucine 74, and arginine 88 together coordinate substrate. ATP-binding positions include 89-91, glutamate 99, and 124-130; these read GLR and NSFISST.

The protein belongs to the bacterial CoaD family. As to quaternary structure, homohexamer. Mg(2+) serves as cofactor.

Its subcellular location is the cytoplasm. The catalysed reaction is (R)-4'-phosphopantetheine + ATP + H(+) = 3'-dephospho-CoA + diphosphate. It participates in cofactor biosynthesis; coenzyme A biosynthesis; CoA from (R)-pantothenate: step 4/5. Its function is as follows. Reversibly transfers an adenylyl group from ATP to 4'-phosphopantetheine, yielding dephospho-CoA (dPCoA) and pyrophosphate. This chain is Phosphopantetheine adenylyltransferase, found in Shewanella baltica (strain OS223).